Here is a 353-residue protein sequence, read N- to C-terminus: UPF0283 membrane protein YcjF (353 aa).

Residues 1 to 19 (MSEPLKPRIDFAEPLKEEP) are compositionally biased toward basic and acidic residues. Positions 1–35 (MSEPLKPRIDFAEPLKEEPTSAFKAQQTFSEAESR) are disordered. 3 consecutive transmembrane segments (helical) span residues 70–90 (MVMG…VQWT), 100–120 (VALG…GSVV), and 213–233 (ESTL…FIAW).

Belongs to the UPF0283 family.

The protein resides in the cell inner membrane. The chain is UPF0283 membrane protein YcjF from Salmonella paratyphi B (strain ATCC BAA-1250 / SPB7).